We begin with the raw amino-acid sequence, 34 residues long: Photosystem II reaction center protein M (34 aa).

A helical membrane pass occupies residues 5 to 25 (ILAFIATALFISIPTAFLLIP).

Belongs to the PsbM family. PSII is composed of 1 copy each of membrane proteins PsbA, PsbB, PsbC, PsbD, PsbE, PsbF, PsbH, PsbI, PsbJ, PsbK, PsbL, PsbM, PsbT, PsbX, PsbY, PsbZ, Psb30/Ycf12, at least 3 peripheral proteins of the oxygen-evolving complex and a large number of cofactors. It forms dimeric complexes.

It is found in the plastid. Its subcellular location is the chloroplast thylakoid membrane. In terms of biological role, one of the components of the core complex of photosystem II (PSII). PSII is a light-driven water:plastoquinone oxidoreductase that uses light energy to abstract electrons from H(2)O, generating O(2) and a proton gradient subsequently used for ATP formation. It consists of a core antenna complex that captures photons, and an electron transfer chain that converts photonic excitation into a charge separation. This subunit is found at the monomer-monomer interface. The chain is Photosystem II reaction center protein M from Psilotum nudum (Whisk fern).